We begin with the raw amino-acid sequence, 921 residues long: Extended synaptotagmin-2 (921 aa).

Over 1–103 (MTANRDAALS…RPGGPENPGG (103 aa)) the chain is Cytoplasmic. The interval 1-103 (MTANRDAALS…RPGGPENPGG (103 aa)) is disordered. Residues 58-75 (GARRRAKTARGLRGHRQR) show a composition bias toward basic residues. Residues 104 to 124 (VLSVELPGLLAQLARSFALLL) form a helical membrane-spanning segment. The Lumenal portion of the chain corresponds to 125-127 (PVY). A helical transmembrane segment spans residues 128-148 (ALGYLGLSFSWVLLALALLAW). Residues 149 to 921 (CRRSRGLKAL…EDGTRPQAMT (773 aa)) are Cytoplasmic-facing. The SMP-LTD domain maps to 191 to 370 (DTERAEWLNK…LPNRITVPLV (180 aa)). C2 domains follow at residues 369–489 (LVSE…DEWF) and 514–639 (NLDK…QLSN). 9 residues coordinate Ca(2+): K400, D401, D413, D460, E461, D462, D464, D466, and D467. The interval 660 to 754 (RERPPDHQHS…GHISVKEPTP (95 aa)) is disordered. S691 and S693 each carry phosphoserine. T705 is subject to Phosphothreonine. Residues S736, S738, S739, S743, S748, S755, S758, and S761 each carry the phosphoserine modification. Positions 786–908 (PLGQIQLTIR…ELAKGWTQWY (123 aa)) constitute a C2 3 domain. The required for phosphatidylinositol 4,5-bisphosphate-dependent location at the cell membrane stretch occupies residues 833 to 840 (KRRSGRRK).

Belongs to the extended synaptotagmin family. Homodimer. Interacts with ESYT1 and ESYT3. Interacts with FGFR1 that has been activated by FGF1 binding. Interacts with the AP-2 complex; identified in a complex with the AP-2 complex and FGFR1. In terms of tissue distribution, widely expressed with high level in cerebellum.

The protein resides in the cell membrane. It localises to the endoplasmic reticulum membrane. Tethers the endoplasmic reticulum to the cell membrane and promotes the formation of appositions between the endoplasmic reticulum and the cell membrane. Binds glycerophospholipids in a barrel-like domain and may play a role in cellular lipid transport. Plays a role in FGF signaling via its role in the rapid internalization of FGFR1 that has been activated by FGF1 binding; this occurs most likely via the AP-2 complex. Promotes the localization of SACM1L at endoplasmic reticulum-plasma membrane contact sites (EPCS). This Homo sapiens (Human) protein is Extended synaptotagmin-2.